The following is a 204-amino-acid chain: Urease accessory protein UreG (204 aa).

Residue G12–T19 coordinates GTP.

The protein belongs to the SIMIBI class G3E GTPase family. UreG subfamily. In terms of assembly, homodimer. UreD, UreF and UreG form a complex that acts as a GTP-hydrolysis-dependent molecular chaperone, activating the urease apoprotein by helping to assemble the nickel containing metallocenter of UreC. The UreE protein probably delivers the nickel.

It is found in the cytoplasm. Functionally, facilitates the functional incorporation of the urease nickel metallocenter. This process requires GTP hydrolysis, probably effectuated by UreG. In Hahella chejuensis (strain KCTC 2396), this protein is Urease accessory protein UreG.